The chain runs to 139 residues: Plastocyanin (139 aa).

Residues 1–34 (MKLISASLRRFSLAVLTILLVVSSFAVFTPSASA) form the signal peptide. The Plastocyanin-like domain maps to 35–139 (ETYQVKLGTD…GMVGTITVQG (105 aa)). Positions 73, 123, 126, and 131 each coordinate Cu cation.

Belongs to the plastocyanin family. Requires Cu(2+) as cofactor.

It is found in the cellular thylakoid membrane. In terms of biological role, participates in electron transfer between P700 and the cytochrome b6-f complex in photosystem I. The protein is Plastocyanin of Nostoc punctiforme (strain ATCC 29133 / PCC 73102).